A 426-amino-acid polypeptide reads, in one-letter code: tRNA(Ile)-lysidine synthase (426 aa).

27 to 32 lines the ATP pocket; that stretch reads SGGADS.

It belongs to the tRNA(Ile)-lysidine synthase family.

It localises to the cytoplasm. The catalysed reaction is cytidine(34) in tRNA(Ile2) + L-lysine + ATP = lysidine(34) in tRNA(Ile2) + AMP + diphosphate + H(+). In terms of biological role, ligates lysine onto the cytidine present at position 34 of the AUA codon-specific tRNA(Ile) that contains the anticodon CAU, in an ATP-dependent manner. Cytidine is converted to lysidine, thus changing the amino acid specificity of the tRNA from methionine to isoleucine. The protein is tRNA(Ile)-lysidine synthase of Bacteroides thetaiotaomicron (strain ATCC 29148 / DSM 2079 / JCM 5827 / CCUG 10774 / NCTC 10582 / VPI-5482 / E50).